A 412-amino-acid chain; its full sequence is Gamma-glutamyl phosphate reductase (412 aa).

The protein belongs to the gamma-glutamyl phosphate reductase family.

The protein localises to the cytoplasm. It catalyses the reaction L-glutamate 5-semialdehyde + phosphate + NADP(+) = L-glutamyl 5-phosphate + NADPH + H(+). It functions in the pathway amino-acid biosynthesis; L-proline biosynthesis; L-glutamate 5-semialdehyde from L-glutamate: step 2/2. Catalyzes the NADPH-dependent reduction of L-glutamate 5-phosphate into L-glutamate 5-semialdehyde and phosphate. The product spontaneously undergoes cyclization to form 1-pyrroline-5-carboxylate. This Aliarcobacter butzleri (strain RM4018) (Arcobacter butzleri) protein is Gamma-glutamyl phosphate reductase.